The chain runs to 530 residues: ATP-dependent 6-phosphofructokinase 4, chloroplastic (530 aa).

The N-terminal 54 residues, 1-54 (MEASISFLGSTKPNISLFNPSSNVLPRRDFPLPALKLKKVSVLPRILHQKRLIR), are a transit peptide targeting the chloroplast. Phosphoserine is present on Ser-121. Residues Gly-152, 215–216 (RG), and 240–243 (GGGT) each bind ATP. Residues 269-271 (TID), 314-316 (MGR), Glu-370, and 427-430 (YMIR) each bind substrate. The Proton acceptor role is filled by Asp-271.

This sequence belongs to the phosphofructokinase type A (PFKA) family. PPi-dependent PFK group II subfamily. Atypical ATP-dependent clade 'X' sub-subfamily. In terms of assembly, homotetramer. The cofactor is Mg(2+). As to expression, expressed in leaves, stems and flowers.

The protein resides in the plastid. Its subcellular location is the chloroplast. It catalyses the reaction beta-D-fructose 6-phosphate + ATP = beta-D-fructose 1,6-bisphosphate + ADP + H(+). It participates in carbohydrate degradation; glycolysis; D-glyceraldehyde 3-phosphate and glycerone phosphate from D-glucose: step 3/4. Its activity is regulated as follows. Allosterically activated by AMP. In terms of biological role, catalyzes the phosphorylation of D-fructose 6-phosphate to fructose 1,6-bisphosphate by ATP, the first committing step of glycolysis. In Arabidopsis thaliana (Mouse-ear cress), this protein is ATP-dependent 6-phosphofructokinase 4, chloroplastic.